The chain runs to 264 residues: MKQYLDLMRRVRAQGTPKADRTGTGTLSIFGHQMRFDLRQGFLLVTTKRCHLRSIIHELLWFLNGDTNIAYLQQNNVSIWDEWADDNGDLGPVYGRQWRAWGTSDGRQIDQLAEVVRQLKQDPDSRRIIVSAWNVGELDKMALAPCHALFQFYVANGTLSCQLYQRSCDIFLGLPFNIASYALLVHMLAQQCDLQVGDFVWTGGDTHLYSNHLQQADLQLTRDPLPLPQLLIKRRPATLFDYRFEDFELTGYDPHPAIKAPVAV.

Arg21 lines the dUMP pocket. His51 provides a ligand contact to (6R)-5,10-methylene-5,6,7,8-tetrahydrofolate. Residue 126–127 (RR) coordinates dUMP. Catalysis depends on Cys146, which acts as the Nucleophile. Residues 166 to 169 (RSCD), Asn177, and 207 to 209 (HLY) each bind dUMP. Asp169 lines the (6R)-5,10-methylene-5,6,7,8-tetrahydrofolate pocket. Ala263 provides a ligand contact to (6R)-5,10-methylene-5,6,7,8-tetrahydrofolate.

The protein belongs to the thymidylate synthase family. Bacterial-type ThyA subfamily. As to quaternary structure, homodimer.

The protein localises to the cytoplasm. The catalysed reaction is dUMP + (6R)-5,10-methylene-5,6,7,8-tetrahydrofolate = 7,8-dihydrofolate + dTMP. It participates in pyrimidine metabolism; dTTP biosynthesis. Its function is as follows. Catalyzes the reductive methylation of 2'-deoxyuridine-5'-monophosphate (dUMP) to 2'-deoxythymidine-5'-monophosphate (dTMP) while utilizing 5,10-methylenetetrahydrofolate (mTHF) as the methyl donor and reductant in the reaction, yielding dihydrofolate (DHF) as a by-product. This enzymatic reaction provides an intracellular de novo source of dTMP, an essential precursor for DNA biosynthesis. This Sodalis glossinidius (strain morsitans) protein is Thymidylate synthase.